The following is a 397-amino-acid chain: Heterogeneous nuclear ribonucleoprotein K homolog (397 aa).

Residues 1-41 (MMIKVGAAINGTDSPKAMKREHDNDDGDRTGRHKRPKTDGF) are disordered. Over residues 16–30 (KAMKREHDNDDGDRT) the composition is skewed to basic and acidic residues. KH domains lie at 49-111 (KFEV…LKDV) and 124-189 (PCEV…IEEV). The tract at residues 220-279 (GGFPGNMPAGGPPNNRGPAPQRGGQGPPGGPRSYGGAITQGGGQRSFEAGDFQQFRGGPG) is disordered. The span at 224 to 241 (GNMPAGGPPNNRGPAPQR) shows a compositional bias: low complexity. The KH 3 domain maps to 316–379 (VTTAQVTIPS…QQIHSAQYLL (64 aa)).

In terms of assembly, interacts with alg-1; the interaction is direct and may be strengthened through RNA-protein association. Expressed in gut, muscle, neuronal and hypodermal tissues. Highly expressed in the germline and oocytes.

It localises to the nucleus. Its subcellular location is the cytoplasm. Its function is as follows. RNA-binding protein which functions together with alg-1, a component of the miRNA loading complex, to modulate the processing and activity of specific miRNAs such as miR-58 and let-7 to regulate gene expression at the post-transcriptional level during embryonic, hypodermal and neuronal development. Promotes the lsy-6-mediated repression of cog-1 in uterine cells. In embryos, may play a role in the DNA damage response. The protein is Heterogeneous nuclear ribonucleoprotein K homolog of Caenorhabditis elegans.